A 156-amino-acid polypeptide reads, in one-letter code: 6,7-dimethyl-8-ribityllumazine synthase (156 aa).

5-amino-6-(D-ribitylamino)uracil is bound by residues Phe-23, 57 to 59 (AYE), and 81 to 83 (AII). 86-87 (GT) serves as a coordination point for (2S)-2-hydroxy-3-oxobutyl phosphate. His-89 functions as the Proton donor in the catalytic mechanism. Phe-114 serves as a coordination point for 5-amino-6-(D-ribitylamino)uracil. (2S)-2-hydroxy-3-oxobutyl phosphate is bound at residue Arg-128.

Belongs to the DMRL synthase family.

It catalyses the reaction (2S)-2-hydroxy-3-oxobutyl phosphate + 5-amino-6-(D-ribitylamino)uracil = 6,7-dimethyl-8-(1-D-ribityl)lumazine + phosphate + 2 H2O + H(+). It participates in cofactor biosynthesis; riboflavin biosynthesis; riboflavin from 2-hydroxy-3-oxobutyl phosphate and 5-amino-6-(D-ribitylamino)uracil: step 1/2. Its function is as follows. Catalyzes the formation of 6,7-dimethyl-8-ribityllumazine by condensation of 5-amino-6-(D-ribitylamino)uracil with 3,4-dihydroxy-2-butanone 4-phosphate. This is the penultimate step in the biosynthesis of riboflavin. This is 6,7-dimethyl-8-ribityllumazine synthase from Helicobacter pylori (strain P12).